The chain runs to 434 residues: Methyl-coenzyme M reductase subunit beta (434 aa).

Y365 serves as a coordination point for coenzyme M. G367 serves as a coordination point for coenzyme B.

It belongs to the methyl-coenzyme M reductase beta subunit family. In terms of assembly, MCR is a hexamer of two alpha, two beta, and two gamma chains, forming a dimer of heterotrimers. Requires coenzyme F430 as cofactor.

It localises to the cytoplasm. The catalysed reaction is coenzyme B + methyl-coenzyme M = methane + coenzyme M-coenzyme B heterodisulfide. It participates in one-carbon metabolism; methyl-coenzyme M reduction; methane from methyl-coenzyme M: step 1/1. In terms of biological role, component of the methyl-coenzyme M reductase (MCR) I that catalyzes the reductive cleavage of methyl-coenzyme M (CoM-S-CH3 or 2-(methylthio)ethanesulfonate) using coenzyme B (CoB or 7-mercaptoheptanoylthreonine phosphate) as reductant which results in the production of methane and the mixed heterodisulfide of CoB and CoM (CoM-S-S-CoB). This is the final step in methanogenesis. The polypeptide is Methyl-coenzyme M reductase subunit beta (mcrB) (Methanosarcina barkeri (strain Fusaro / DSM 804)).